The primary structure comprises 77 residues: U8-lycotoxin-Ls1w (77 aa).

The first 20 residues, 1–20 (MKLIIFTGLVLFAIVSLIEA), serve as a signal peptide directing secretion. Residues 21-26 (QAENEK) constitute a propeptide that is removed on maturation.

The protein belongs to the neurotoxin 19 (CSTX) family. 08 (U8-Lctx) subfamily. Post-translationally, contains 4 disulfide bonds. In terms of tissue distribution, expressed by the venom gland.

It localises to the secreted. This Lycosa singoriensis (Wolf spider) protein is U8-lycotoxin-Ls1w.